We begin with the raw amino-acid sequence, 447 residues long: C4-dicarboxylate transport protein (447 aa).

The next 9 helical transmembrane spans lie at 13-33 (SLYF…HYWP), 49-69 (LIKM…IAGM), 81-101 (LALL…LLIV), 149-169 (AFAK…GFAL), 189-209 (VLFA…FGAM), 227-247 (LMGT…GLIA), 302-322 (GYSF…VFIA), 336-356 (TLLA…GSGF), and 357-377 (IVLA…LALI). The tract at residues 422–447 (ETEAEANEPEAVLDEIDQHMPVPAAR) is disordered. Residues 425-436 (AEANEPEAVLDE) show a composition bias toward acidic residues.

The protein belongs to the dicarboxylate/amino acid:cation symporter (DAACS) (TC 2.A.23) family.

The protein resides in the cell inner membrane. Responsible for the transport of dicarboxylates such as succinate, fumarate, and malate from the periplasm across the membrane. This Leptothrix cholodnii (strain ATCC 51168 / LMG 8142 / SP-6) (Leptothrix discophora (strain SP-6)) protein is C4-dicarboxylate transport protein.